The primary structure comprises 207 residues: Large ribosomal subunit protein bL25 (207 aa).

Belongs to the bacterial ribosomal protein bL25 family. CTC subfamily. Part of the 50S ribosomal subunit; part of the 5S rRNA/L5/L18/L25 subcomplex. Contacts the 5S rRNA. Binds to the 5S rRNA independently of L5 and L18.

Functionally, this is one of the proteins that binds to the 5S RNA in the ribosome where it forms part of the central protuberance. This is Large ribosomal subunit protein bL25 from Brucella abortus (strain S19).